The sequence spans 147 residues: Hemoglobin subunit beta-1 (147 aa).

Residue Ser2 is modified to N-acetylserine. The region spanning 3–147 (FLSAEEKGLV…VASALAHRYH (145 aa)) is the Globin domain. An N6-succinyllysine modification is found at Lys18. A phosphoserine mark is found at Ser45 and Ser51. Lys60 carries the post-translational modification N6-succinyllysine. The heme b site is built by His64 and His93. Residue Arg105 is modified to Asymmetric dimethylarginine.

This sequence belongs to the globin family. In terms of assembly, heterotetramer of two alpha chains and two beta chains. Red blood cells.

Functionally, involved in oxygen transport from the lung to the various peripheral tissues. In Panthera onca (Jaguar), this protein is Hemoglobin subunit beta-1 (HBB1).